A 158-amino-acid polypeptide reads, in one-letter code: Endoribonuclease YbeY (158 aa).

The Zn(2+) site is built by His119, His123, and His129.

Belongs to the endoribonuclease YbeY family. Zn(2+) is required as a cofactor.

It localises to the cytoplasm. In terms of biological role, single strand-specific metallo-endoribonuclease involved in late-stage 70S ribosome quality control and in maturation of the 3' terminus of the 16S rRNA. The protein is Endoribonuclease YbeY of Shewanella woodyi (strain ATCC 51908 / MS32).